The chain runs to 973 residues: MNFKENNIYSGFKLLNIENLNEIGGVGLRFEHEKTKAKLIKILSEDDNKCFAIGFRTPPENSTGVPHILEHSVLCGSRKFNTKEPFVELLKGSLNTFLNAMTYPDKTIYPVASRNEKDFMNLMDVYLDAVLYPNIYKHKEIFMQEGWHYYIENKEDELKYNGVVYNEMKGAYSSPDSILYRKIPQTIYPDTCYALSSGGDPDEIPNLTYEEFVEFHKKYYHPSNSYIFLYGNGDTEKELEFINEEYLKNFEYKEIDSEIKEQKSFESMKEESFTYGIAESEDLNHKSYYSLNFVIGDATDGEKGLAFDVLAYLLTRSTAAPLKKALIDAGIGKAVSGDFDNSTKQSAFTVLVKNAELNKEEEFKKVVMDTLKDLVENGIDKELIEASINRVEFELREGDYGSYPNGLIYYLKVMDSWLYDGDPYVHLEYEKNLEKIKSALTSNYFEDLIERYMINNTHSSLVSLHPEKGINEKKSAELKKKLEEIKNSFDEKTLNEIIDNCKKLKERQSTPDKKEDLESIPMLSLEDIDKEATKIPTEEKEIDGITTLHHDFHTNKIDYVNFFFNTNSVPEDLIPYVGLLCDILGKCGTENYDYSKLSNAINISTGGISFGAITFANLKKNNEFRPYLEISYKALSSKTNKAIELVDEIVNHTDLDDMDRIMQIIREKRARLEGAIFDSGHRIAMKKVLSYSTNRGAYDEKISGLDYYDFLVNIEKEDKKSTISDSLKKVRDLIFNKGNMLISYSGKEEEYENFKEKVKYLISKTNNNDFEKEEYNFELGKKNEGLLTQGNVQYVAKGGNYKTHGYKYSGALSLLESILGFDYLWNAVRVKGGAYGVFSNFRRDGGAYIVSYRDPNIKSTLEAYDNIPKYLNDFEADEREMTKYIIGTIRKYDQPISNGIKGDIAVSYYLSNFTYEDLQKEREEIINADVEKIKSFAPMIKDLMKEDYICVLGNEEKIKENKDLFNNIKSVIK.

In Clostridium perfringens (strain 13 / Type A), this protein is Protein HypA (hypA).